The chain runs to 427 residues: Peptidase B (427 aa).

Residues Lys195 and Asp200 each coordinate Mn(2+). Lys207 is an active-site residue. 3 residues coordinate Mn(2+): Asp218, Asp277, and Glu279. Arg281 is an active-site residue.

The protein belongs to the peptidase M17 family. In terms of assembly, homohexamer. The cofactor is Mn(2+).

Its subcellular location is the cytoplasm. It carries out the reaction Release of an N-terminal amino acid, Xaa, from a peptide or arylamide. Xaa is preferably Glu or Asp but may be other amino acids, including Leu, Met, His, Cys and Gln.. Its function is as follows. Probably plays an important role in intracellular peptide degradation. The chain is Peptidase B from Salmonella choleraesuis (strain SC-B67).